Here is a 389-residue protein sequence, read N- to C-terminus: N-terminal EF-hand calcium-binding protein 2 (389 aa).

Arginine 10 carries the omega-N-methylarginine modification. Arginine 42 carries the asymmetric dimethylarginine modification. EF-hand domains follow at residues 63-98 and 99-132; these read GGTA…GVLN and EKEL…HMGD. 10 residues coordinate Ca(2+): aspartate 76, asparagine 78, aspartate 80, lysine 82, glutamate 87, aspartate 110, aspartate 112, threonine 114, histidine 116, and glutamate 121. Residues 173–198 adopt a coiled-coil conformation; it reads LKETANQIQSLLSSVESAVEAIEEQT. The ABM domain maps to 289-377; that stretch reads QLVRQEMAVC…LSQPEALSQI (89 aa).

As to quaternary structure, interacts (calcium-dependent) with ADORA2A and GRM5. As to expression, expressed in the iris, in the ciliary margin of the retina and in the inner portion of the neural retina. Expressed in the spinal dorsal horn with especially strong expression in lamina IIi; found in excitory synaptic boutons (at protein level).

Its subcellular location is the cytoplasm. It localises to the cell projection. The protein localises to the dendrite. It is found in the axon. The protein resides in the cell membrane. Functionally, may act as a signaling scaffold protein that senses intracellular calcium. Can modulate ligand-induced internalization of ADORA2A and coupling efficiency of mGluR5/GRM5; for both receptors may regulate signaling activity such as promoting MAPK1/3 (ERK1/2) activation. This Mus musculus (Mouse) protein is N-terminal EF-hand calcium-binding protein 2 (Necab2).